The following is a 366-amino-acid chain: RNA 3'-terminal phosphate cyclase (366 aa).

ATP contacts are provided by glutamine 104, proline 131, tyrosine 294, aspartate 297, glutamine 298, and histidine 320. The Tele-AMP-histidine intermediate role is filled by histidine 320.

Belongs to the RNA 3'-terminal cyclase family. Type 1 subfamily.

The protein resides in the nucleus. It localises to the nucleoplasm. The catalysed reaction is a 3'-end 3'-phospho-ribonucleotide-RNA + ATP = a 3'-end 2',3'-cyclophospho-ribonucleotide-RNA + AMP + diphosphate. Functionally, catalyzes the conversion of 3'-phosphate to a 2',3'-cyclic phosphodiester at the end of RNA. The mechanism of action of the enzyme occurs in 3 steps: (A) adenylation of the enzyme by ATP; (B) transfer of adenylate to an RNA-N3'P to produce RNA-N3'PP5'A; (C) and attack of the adjacent 2'-hydroxyl on the 3'-phosphorus in the diester linkage to produce the cyclic end product. Likely functions in some aspects of cellular RNA processing. Function plays an important role in regulating axon regeneration by inhibiting central nervous system (CNS) axon regeneration following optic nerve injury. This is RNA 3'-terminal phosphate cyclase (RTCA) from Bos taurus (Bovine).